Here is a 166-residue protein sequence, read N- to C-terminus: Replication restart protein DnaT (166 aa).

Belongs to the DnaT family. In terms of assembly, homooligomerizes. Interacts with PriB. Component of the replication restart primosome. Primosome assembly occurs via a 'hand-off' mechanism. PriA binds to replication forks, subsequently PriB then DnaT bind; DnaT then displaces ssDNA to generate the helicase loading substrate.

In terms of biological role, involved in the restart of stalled replication forks, which reloads the replicative helicase on sites other than the origin of replication. Can function in multiple replication restart pathways. Displaces ssDNA from a PriB-ssDNA complex. Probably forms a spiral filament on ssDNA. The sequence is that of Replication restart protein DnaT from Buchnera aphidicola subsp. Schizaphis graminum (strain Sg).